The sequence spans 256 residues: Probable elongation factor 1-delta (256 aa).

3 positions are modified to phosphoserine: serine 37, serine 53, and serine 89. Residues 110-146 (NGVSKEPEVEAKKPEANDDDDDVDLFGSDSEEEDGEA) form a disordered region. The segment covering 114 to 125 (KEPEVEAKKPEA) has biased composition (basic and acidic residues). The segment covering 126-144 (NDDDDDVDLFGSDSEEEDG) has biased composition (acidic residues). Serine 137 and serine 139 each carry phosphoserine.

The protein belongs to the EF-1-beta/EF-1-delta family. EF-1 is composed of 4 subunits: alpha, beta, delta, and gamma.

Functionally, EF-1-beta and EF-1-delta stimulate the exchange of GDP bound to EF-1-alpha to GTP. The sequence is that of Probable elongation factor 1-delta (eEF1delta) from Drosophila melanogaster (Fruit fly).